Reading from the N-terminus, the 389-residue chain is MQPRRGEPYLLTPGPLTTAFSTKEAMLRDWGSWDGDFRAMTALLRSSLLEIAGDTAGEYDCVPLQGSGSYCVEAMLGSLIPRDAHALVLANGAYGKRIVTTLGYLGRACTVLDKGDYLPPRGAEIERMLDDDPRITHVVAVHCETSSGILNPIEEIAAATAKKGRKLLIDSMSAFGAVPLDVREIACEAFVSSANKCIEGVPGFGFVIARKSALREAKGRSHSLALDVYDQWDVMNRTGQWRFTPPTHAVAAFIEALRLFRLEGGQVGRLARYANNRDVLVAGMRELGFEPLLNARWRSPVIVTFFAPAHPSFRFETFYELMKQQGFIIYPGKLTVVDSFRIGCIGQVDEHVMRRVVEACANSLRTMGVGHAAPPAAALEERRTLAEAA.

N6-(pyridoxal phosphate)lysine is present on lysine 196.

This sequence belongs to the class-V pyridoxal-phosphate-dependent aminotransferase family. PhnW subfamily. Homodimer. It depends on pyridoxal 5'-phosphate as a cofactor.

The enzyme catalyses (2-aminoethyl)phosphonate + pyruvate = phosphonoacetaldehyde + L-alanine. In terms of biological role, involved in phosphonate degradation. The polypeptide is 2-aminoethylphosphonate--pyruvate transaminase 1 (Paraburkholderia xenovorans (strain LB400)).